A 1257-amino-acid chain; its full sequence is Probable aldehyde oxidase gad-3 (1257 aa).

Residues 4-91 (TGIFFNVNGK…KTFVITVEGV (88 aa)) enclose the 2Fe-2S ferredoxin-type domain. Residues C43, C48, C51, and C73 each contribute to the [2Fe-2S] cluster site. The FAD-binding PCMH-type domain occupies 229 to 459 (LKGDRIELLL…TSLEVHIDAL (231 aa)). Residue E1208 is the Proton acceptor of the active site.

It belongs to the xanthine dehydrogenase family. [2Fe-2S] cluster serves as cofactor. The cofactor is FAD. Requires Mo-molybdopterin as cofactor.

The catalysed reaction is an aldehyde + O2 + H2O = a carboxylate + H2O2 + H(+). Its function is as follows. May be involved in the metabolism of 1-methylnicotinamide (MNA). Linked to regulation of longevity through generation of reactive oxygen species, where it probably functions in a pathway downstream of the sirtuin sir-2.1 and the nicotinamide N-methyltransferase anmt-1. The polypeptide is Probable aldehyde oxidase gad-3 (Caenorhabditis elegans).